The sequence spans 602 residues: Sensor histidine kinase AtsR (602 aa).

The next 2 membrane-spanning stretches (helical) occupy residues isoleucine 11–phenylalanine 31 and alanine 182–phenylalanine 202. The 220-residue stretch at methionine 242–leucine 461 folds into the Histidine kinase domain. Histidine 245 is modified (phosphohistidine; by autocatalysis). The Response regulatory domain maps to histidine 484–arginine 601. 4-aspartylphosphate is present on aspartate 533.

It localises to the cell inner membrane. It carries out the reaction ATP + protein L-histidine = ADP + protein N-phospho-L-histidine.. Functionally, member of a two-component regulatory system involved in control of gene expression; inhibits synthesis of (at least) the polyketide antibiotic thailandamide. Its two-component partner may be BTH_I0635. The polypeptide is Sensor histidine kinase AtsR (Burkholderia thailandensis (strain ATCC 700388 / DSM 13276 / CCUG 48851 / CIP 106301 / E264)).